Reading from the N-terminus, the 156-residue chain is ATP synthase subunit b (156 aa).

A helical transmembrane segment spans residues 7 to 29 (LLGQAISFAMFVWFCMKYVWPPI).

The protein belongs to the ATPase B chain family. F-type ATPases have 2 components, F(1) - the catalytic core - and F(0) - the membrane proton channel. F(1) has five subunits: alpha(3), beta(3), gamma(1), delta(1), epsilon(1). F(0) has three main subunits: a(1), b(2) and c(10-14). The alpha and beta chains form an alternating ring which encloses part of the gamma chain. F(1) is attached to F(0) by a central stalk formed by the gamma and epsilon chains, while a peripheral stalk is formed by the delta and b chains.

It is found in the cell inner membrane. Functionally, f(1)F(0) ATP synthase produces ATP from ADP in the presence of a proton or sodium gradient. F-type ATPases consist of two structural domains, F(1) containing the extramembraneous catalytic core and F(0) containing the membrane proton channel, linked together by a central stalk and a peripheral stalk. During catalysis, ATP synthesis in the catalytic domain of F(1) is coupled via a rotary mechanism of the central stalk subunits to proton translocation. In terms of biological role, component of the F(0) channel, it forms part of the peripheral stalk, linking F(1) to F(0). The chain is ATP synthase subunit b from Vibrio vulnificus (strain CMCP6).